A 123-amino-acid chain; its full sequence is Ribosome-binding factor A (123 aa).

This sequence belongs to the RbfA family. As to quaternary structure, monomer. Binds 30S ribosomal subunits, but not 50S ribosomal subunits or 70S ribosomes.

The protein localises to the cytoplasm. Its function is as follows. One of several proteins that assist in the late maturation steps of the functional core of the 30S ribosomal subunit. Associates with free 30S ribosomal subunits (but not with 30S subunits that are part of 70S ribosomes or polysomes). Required for efficient processing of 16S rRNA. May interact with the 5'-terminal helix region of 16S rRNA. The sequence is that of Ribosome-binding factor A from Desulfatibacillum aliphaticivorans.